We begin with the raw amino-acid sequence, 2820 residues long: Neurofibromin (2820 aa).

Ala-2 bears the N-acetylalanine mark. A phosphoserine mark is found at Ser-866 and Ser-878. Residues 1253–1463 (HLLYQLLWNM…DLARRFFLDI (211 aa)) form the Ras-GAP domain. Positions 1561–1719 (EKEEFKALKT…ATLALEEDLK (159 aa)) constitute a CRAL-TRIO domain. Residues 1561–1818 (EKEEFKALKT…RTRWELSQPD (258 aa)) form a lipid binding region. Phosphoserine is present on residues Ser-2169 and Ser-2448. Residues 2457–2482 (YPIHHGDPSSRTLKETQPWSSPRGSE) are disordered. Positions 2458–2470 (PIHHGDPSSRTLK) are enriched in basic and acidic residues. Thr-2495 bears the Phosphothreonine mark. Phosphoserine occurs at positions 2496, 2502, 2504, and 2524. A Bipartite nuclear localization signal motif is present at residues 2536–2552 (KRQEMESGITTPPKMRR). Thr-2546 bears the Phosphothreonine mark. A phosphoserine mark is found at Ser-2578, Ser-2783, and Ser-2798. The interval 2768-2820 (TSQHSPGIDKENVELSPTTGHCNSGRTRHGSASQVQKQRSAGSFKRNSIKKIV) is disordered. Over residues 2782–2808 (LSPTTGHCNSGRTRHGSASQVQKQRSA) the composition is skewed to polar residues.

As to quaternary structure, interacts with HTR6. Interacts with SPRED2. Ubiquitinated by RNF7/RBX2, leading to its degradation.

The protein localises to the nucleus. It localises to the nucleolus. The protein resides in the cell membrane. Stimulates the GTPase activity of Ras. NF1 shows greater affinity for Ras GAP, but lower specific activity. May be a regulator of Ras activity. The polypeptide is Neurofibromin (Nf1) (Rattus norvegicus (Rat)).